Consider the following 230-residue polypeptide: Large ribosomal subunit protein uL1c (230 aa).

Belongs to the universal ribosomal protein uL1 family. As to quaternary structure, part of the 50S ribosomal subunit.

The protein localises to the plastid. Its subcellular location is the chloroplast. Binds directly to 23S rRNA. Might be involved in E site tRNA release (Potential). This Phaeodactylum tricornutum (strain CCAP 1055/1) protein is Large ribosomal subunit protein uL1c (rpl1).